The chain runs to 122 residues: MIQTQSMLDVADNSGARRVMCIKVLGGSHRRYAGIGDIIKVTVKEAIPRGKVKKGQVMTAVVVRTKHGVRRTDGSIIRFDGNAAVLLNNKQEPIGTRIFGPVTRELRTEKFMKIVSLAPEVL.

It belongs to the universal ribosomal protein uL14 family. As to quaternary structure, part of the 50S ribosomal subunit. Forms a cluster with proteins L3 and L19. In the 70S ribosome, L14 and L19 interact and together make contacts with the 16S rRNA in bridges B5 and B8.

Its function is as follows. Binds to 23S rRNA. Forms part of two intersubunit bridges in the 70S ribosome. This is Large ribosomal subunit protein uL14 from Pseudomonas aeruginosa (strain LESB58).